The sequence spans 730 residues: Wall-associated receptor kinase-like 1 (730 aa).

Positions 1-25 (MKTKTSIFQFIVASVLTLLINDSSA) are cleaved as a signal peptide. The Extracellular portion of the chain corresponds to 26–358 (ATPPPPISNS…KPTKPPVLQG (333 aa)). N-linked (GlcNAc...) asparagine glycans are attached at residues Asn34, Asn40, Asn70, Asn77, Asn92, Asn119, Asn132, Asn211, Asn233, Asn269, and Asn281. Residues 282 to 341 (CSCEYDYFSGMSYRNCYCDYGYTGNPYLRGGCVDTDSCEGNHNCGEDAHCVNMPGPMSMC) form an atypical EGF-like region. Intrachain disulfides connect Cys284-Cys297, Cys319-Cys331, and Cys325-Cys341. Residues 359–379 (ILIGLSGLVFFVGLFWLFKLI) traverse the membrane as a helical segment. The Cytoplasmic segment spans residues 380–730 (KKRRNINRSK…DQPMAINNKR (351 aa)). The region spanning 429 to 702 (FSIDRVLGQG…KEVSNELERI (274 aa)) is the Protein kinase domain. ATP is bound by residues 435–443 (LGQGGQGTV) and Lys457. The residue at position 502 (Tyr502) is a Phosphotyrosine. Asp554 (proton acceptor) is an active-site residue. 2 positions are modified to phosphothreonine: Thr588 and Thr593. Tyr601 is subject to Phosphotyrosine. The interval 685 to 730 (KGKNRPNMKEVSNELERIRSSPEDLDVRTENEDEEEDQPMAINNKR) is disordered. Over residues 691–714 (NMKEVSNELERIRSSPEDLDVRTE) the composition is skewed to basic and acidic residues.

Belongs to the protein kinase superfamily. Ser/Thr protein kinase family. As to expression, preferentially expressed in roots and flowers.

It is found in the membrane. It carries out the reaction L-seryl-[protein] + ATP = O-phospho-L-seryl-[protein] + ADP + H(+). It catalyses the reaction L-threonyl-[protein] + ATP = O-phospho-L-threonyl-[protein] + ADP + H(+). Serine/threonine-protein kinase that may function as a signaling receptor of extracellular matrix component. The protein is Wall-associated receptor kinase-like 1 (WAKL1) of Arabidopsis thaliana (Mouse-ear cress).